The chain runs to 73 residues: MAKEELVEFGGKVSEVLPDNRFRVTLENGFEVWAYSSGRLKRNRIRILAGDRVTLEMSPYDLTKGRINYRHKF.

The S1-like domain maps to 1–72; the sequence is MAKEELVEFG…TKGRINYRHK (72 aa).

The protein belongs to the IF-1 family. In terms of assembly, component of the 30S ribosomal translation pre-initiation complex which assembles on the 30S ribosome in the order IF-2 and IF-3, IF-1 and N-formylmethionyl-tRNA(fMet); mRNA recruitment can occur at any time during PIC assembly.

The protein localises to the cytoplasm. In terms of biological role, one of the essential components for the initiation of protein synthesis. Stabilizes the binding of IF-2 and IF-3 on the 30S subunit to which N-formylmethionyl-tRNA(fMet) subsequently binds. Helps modulate mRNA selection, yielding the 30S pre-initiation complex (PIC). Upon addition of the 50S ribosomal subunit IF-1, IF-2 and IF-3 are released leaving the mature 70S translation initiation complex. In Cupriavidus pinatubonensis (strain JMP 134 / LMG 1197) (Cupriavidus necator (strain JMP 134)), this protein is Translation initiation factor IF-1 2.